A 485-amino-acid chain; its full sequence is N-acetylglucosaminyltransferase (485 aa).

Belongs to the NodC/HAS family.

It localises to the cell membrane. In terms of biological role, may be involved in the synthesis of NodRm-1, a sulfated N-acyl-beta-1,4-tetrasaccharide of N-acetylglucosamine which initiates a series of events in the host plant species leading eventually to nodulation. The chain is N-acetylglucosaminyltransferase (nodC) from Bradyrhizobium diazoefficiens (strain JCM 10833 / BCRC 13528 / IAM 13628 / NBRC 14792 / USDA 110).